The chain runs to 663 residues: Glutamate-rich protein 6 (663 aa).

Disordered regions lie at residues 1–74 (MAHL…ETFS) and 106–136 (LTST…HKSF). Residues 20-69 (ESEEELEEEEEEEEVEEEEEEVEEEEEEVEEEEEEVVEEELVGEEQELEA) show a composition bias toward acidic residues. The segment covering 112 to 132 (PSQSATSTETPSASPPSSTSS) has biased composition (low complexity).

This sequence belongs to the ERICH6 family.

The protein resides in the nucleus. The polypeptide is Glutamate-rich protein 6 (ERICH6) (Homo sapiens (Human)).